Reading from the N-terminus, the 667-residue chain is Beta-galactosidase LacA (667 aa).

R109 provides a ligand contact to substrate. A Zn(2+)-binding site is contributed by C113. Substrate is bound at residue N147. E148 (proton donor) is an active-site residue. 3 residues coordinate Zn(2+): C153, C155, and C158. E307 acts as the Nucleophile in catalysis. Substrate-binding positions include W315 and 355 to 358 (EKFH).

Belongs to the glycosyl hydrolase 42 family.

It catalyses the reaction Hydrolysis of terminal non-reducing beta-D-galactose residues in beta-D-galactosides.. In terms of biological role, hydrolyzes lactose, oNP-galactoside (oNPG), pNP-galactosidase (pNPG), pNP-mannoside, pNP-glucoside, pNP-fucoside, pNP-N-acetylglucosamide, but not pNP-arabinoside or 4-methylumbelliferyl-beta-galactopyranoside (MUG). Transgalactosylates lactose at 10 g/L, but not at 270 g/L. This chain is Beta-galactosidase LacA, found in Lactobacillus acidophilus.